A 124-amino-acid chain; its full sequence is MADLNKLAEDIVGLTLLEAQELKTILKDKYGIEPAAGGAVMVAGPAAAAAPAEEEKTEFDVVLTDAGANKINVIKEVRAITGLGLKEAKDLVEAGGKVKEAASKADAEAMKKKLEEAGAKVELK.

The protein belongs to the bacterial ribosomal protein bL12 family. As to quaternary structure, homodimer. Part of the ribosomal stalk of the 50S ribosomal subunit. Forms a multimeric L10(L12)X complex, where L10 forms an elongated spine to which 2 to 4 L12 dimers bind in a sequential fashion. Binds GTP-bound translation factors.

In terms of biological role, forms part of the ribosomal stalk which helps the ribosome interact with GTP-bound translation factors. Is thus essential for accurate translation. This Cereibacter sphaeroides (strain ATCC 17025 / ATH 2.4.3) (Rhodobacter sphaeroides) protein is Large ribosomal subunit protein bL12.